The primary structure comprises 706 residues: Double-strand break repair protein MRE11 (706 aa).

Ser-2 bears the N-acetylserine mark. Phosphoserine is present on Ser-2. Mn(2+) contacts are provided by Asp-20, His-22, and Asp-60. Positions 87–117 (RPVQFEVISDQSVNFGFSKFPWVNYQDGNLN) are interaction with NBN. A Mn(2+)-binding site is contributed by Asn-128. His-129 acts as the Proton donor in catalysis. Mn(2+)-binding residues include His-217, His-245, and His-247. Residue Lys-255 forms a Glycyl lysine isopeptide (Lys-Gly) (interchain with G-Cter in SUMO2) linkage. Position 275 is a phosphoserine (Ser-275). Lys-282 is covalently cross-linked (Glycyl lysine isopeptide (Lys-Gly) (interchain with G-Cter in UFM1)). Residue Lys-339 forms a Glycyl lysine isopeptide (Lys-Gly) (interchain with G-Cter in ubiquitin) linkage. Residues Lys-384 and Lys-468 each participate in a glycyl lysine isopeptide (Lys-Gly) (interchain with G-Cter in SUMO) cross-link. Lys-481 is covalently cross-linked (Glycyl lysine isopeptide (Lys-Gly) (interchain with G-Cter in ubiquitin)). The span at 505–514 (FRESRQRNTN) shows a compositional bias: basic and acidic residues. The segment at 505–706 (FRESRQRNTN…SSSCPRRNRR (202 aa)) is disordered. Positions 531–541 (RSQSETSTSAF) are enriched in polar residues. Residues 569-579 (GRGRGRGRRGA) are compositionally biased toward basic residues. Asymmetric dimethylarginine is present on residues Arg-570, Arg-572, Arg-574, Arg-576, Arg-577, Arg-580, Arg-587, Arg-592, and Arg-594. Residues 570 to 594 (RGRGRGRRGARGQSSAPRGGSQRGR) carry the GAR motif. Residues 580-589 (RGQSSAPRGG) show a composition bias toward low complexity. A compositionally biased stretch (polar residues) spans 603 to 617 (RGRSSKATSSTSRNM). Phosphoserine is present on residues Ser-618, Ser-640, and Ser-648. The segment covering 643–653 (IEVDDSDEDDI) has biased composition (acidic residues). The segment covering 655–679 (PTNSRADQRWSGTTSSKRMSQSQTA) has biased composition (polar residues). An N6-lactoyllysine modification is found at Lys-671. Ser-674, Ser-676, Ser-686, and Ser-699 each carry phosphoserine. Residues 684–694 (FESDEDDDDDP) are compositionally biased toward acidic residues.

This sequence belongs to the MRE11/RAD32 family. In terms of assembly, component of the MRN complex composed of two heterodimers RAD50 and MRE11 associated with a single NBN. The MRN complexes dimerize on DNA to form joined MRN-MRN oligomers required for DNA double-strand break repair. As part of the MRN complex, interacts with MCM9; the interaction recruits the complex to DNA repair sites. Component of the BASC complex, at least composed of BRCA1, MSH2, MSH6, MLH1, ATM, BLM, RAD50, MRE11 and NBN. Found in a complex with TERF2. Interacts with DCLRE1C/Artemis and DCLRE1B/Apollo. Interacts with ATF2. Interacts with EXD2. Interacts with MRNIP. Interacts with SAMHD1; leading to stimulate 3'-5' exonuclease activity. Interacts (when ubiquitinated) with UBQLN4 (via its UBA domain). Interacts with CYREN (via XLF motif). Interacts with GFI1; promoting methylation by PRMT1. Interacts with DYNLL1; inhibiting the activity of MRE11. Interacts with C1QBP and RAD50; interaction takes place in absence of DNA damage to form the MRC (MRE11-RAD50-C1QBP) complex that inhibits the activity of MRE11. Interacts with AGER/RAGE; AGER is recruited to DNA double-strand break sites where it enhances MRE11 endonuclease activity to promote DNA repair. Mn(2+) is required as a cofactor. Phosphorylated by ATM at Ser-674 and Ser-676 in response to DNA damage, promoting MRE11 activity: phosphorylation activates MRE11 by preventing the interaction between MRE11 and the C1QBP inhibitor. Phosphorylation at Ser-648 by PLK1 primes for phosphorylation at Ser-686 by CK2, inhibiting recruitment of the MRN complex to DNA damage sites. Post-translationally, asymmetric dimethylation by PRMT1 promotes MRE11 exonuclease activity. In terms of processing, lactylation at Lys-671 by CREBBP/CBP in response to DNA damage promotes DNA binding and MRE11 activity. Acetylated on lysine residues by KAT2A /GCN5. Post-translationally, ubiquitinated following DNA damage. Ubiquitination triggers interaction with UBQLN4, leading to MRE11 removal from chromatin and degradation by the proteasome. Ubiquitinated at Lys-339 and Lys-481 by RNF126 via 'Lys-27'- and 'Lys-29'-linked polyubiquitin chains, promoting the exonuclease activity of MRE11. In terms of processing, SUMOylated by PIAS1, stabilizing MRE11 on chromatin during end resection. DeSUMOylated by SENP3 following removal from DNA double-strand breaks (DSBs). Ufmylation at Lys-282 promotes MRE11 activity and is required for activation of the ATM and ATR kinases by the MRN complex.

It localises to the nucleus. Its subcellular location is the chromosome. The protein localises to the telomere. Interaction with SAMHD1 stimulates the double-strand-specific 3'-5' exonuclease activity. RBBP8/CtIP specifically promotes the endonuclease activity to clear protein-DNA adducts and generate clean double-strand break ends. DYNLL1-binding inhibits the activity of MRE11. MRE11 activity is inhibited by C1QBP: in absence of DNA damage, C1QBP interacts with unphosphorylated MRE11, preventing formation and activity of the MRN complex. Functionally, core component of the MRN complex, which plays a central role in double-strand break (DSB) repair, DNA recombination, maintenance of telomere integrity and meiosis. The MRN complex is involved in the repair of DNA double-strand breaks (DSBs) via homologous recombination (HR), an error-free mechanism which primarily occurs during S and G2 phases. The complex (1) mediates the end resection of damaged DNA, which generates proper single-stranded DNA, a key initial steps in HR, and is (2) required for the recruitment of other repair factors and efficient activation of ATM and ATR upon DNA damage. Within the MRN complex, MRE11 possesses both single-strand endonuclease activity and double-strand-specific 3'-5' exonuclease activity. After DSBs, MRE11 is loaded onto DSBs sites and cleaves DNA by cooperating with RBBP8/CtIP to initiate end resection. MRE11 first endonucleolytically cleaves the 5' strand at DNA DSB ends to prevent non-homologous end joining (NHEJ) and licence HR. It then generates a single-stranded DNA gap via 3' to 5' exonucleolytic degradation to create entry sites for EXO1- and DNA2-mediated 5' to 3' long-range resection, which is required for single-strand invasion and recombination. RBBP8/CtIP specifically promotes the endonuclease activity of MRE11 to clear protein-DNA adducts and generate clean double-strand break ends. MRE11 endonuclease activity is also enhanced by AGER/RAGE. The MRN complex is also required for DNA damage signaling via activation of the ATM and ATR kinases: the nuclease activity of MRE11 is not required to activate ATM and ATR. The MRN complex is also required for the processing of R-loops. The MRN complex is involved in the activation of the cGAS-STING pathway induced by DNA damage during tumorigenesis: the MRN complex acts by displacing CGAS from nucleosome sequestration, thereby activating it. In telomeres the MRN complex may modulate t-loop formation. This Mus musculus (Mouse) protein is Double-strand break repair protein MRE11.